We begin with the raw amino-acid sequence, 314 residues long: Transcription factor DICHOTOMA (314 aa).

The 59-residue stretch at 87-145 (KKDRHSKINRPQGPRDRRVRLSIGIARKFFDLQEMLGFDKPSKTLDWLLTKSKEAIKEL) folds into the TCP domain. Residues 201 to 218 (KESRAKARARARERTKEK) form the R domain.

The protein resides in the nucleus. Functionally, transcription regulator involved in the dorsovental asymmetry of flowers. Promotes dorsal identity. In Antirrhinum majus (Garden snapdragon), this protein is Transcription factor DICHOTOMA (DICH).